A 1385-amino-acid polypeptide reads, in one-letter code: DNA-directed RNA polymerase subunit beta' (1385 aa).

Zn(2+) is bound by residues cysteine 72, cysteine 74, cysteine 87, and cysteine 90. Mg(2+) is bound by residues aspartate 463, aspartate 465, and aspartate 467. 4 residues coordinate Zn(2+): cysteine 813, cysteine 887, cysteine 894, and cysteine 897.

The protein belongs to the RNA polymerase beta' chain family. As to quaternary structure, the RNAP catalytic core consists of 2 alpha, 1 beta, 1 beta' and 1 omega subunit. When a sigma factor is associated with the core the holoenzyme is formed, which can initiate transcription. Mg(2+) is required as a cofactor. Zn(2+) serves as cofactor.

It carries out the reaction RNA(n) + a ribonucleoside 5'-triphosphate = RNA(n+1) + diphosphate. Functionally, DNA-dependent RNA polymerase catalyzes the transcription of DNA into RNA using the four ribonucleoside triphosphates as substrates. In Trichlorobacter lovleyi (strain ATCC BAA-1151 / DSM 17278 / SZ) (Geobacter lovleyi), this protein is DNA-directed RNA polymerase subunit beta'.